Here is a 139-residue protein sequence, read N- to C-terminus: ATP synthase epsilon chain (139 aa).

It belongs to the ATPase epsilon chain family. F-type ATPases have 2 components, CF(1) - the catalytic core - and CF(0) - the membrane proton channel. CF(1) has five subunits: alpha(3), beta(3), gamma(1), delta(1), epsilon(1). CF(0) has three main subunits: a, b and c.

The protein localises to the cell inner membrane. Functionally, produces ATP from ADP in the presence of a proton gradient across the membrane. The polypeptide is ATP synthase epsilon chain (Acinetobacter baylyi (strain ATCC 33305 / BD413 / ADP1)).